The primary structure comprises 386 residues: Cytotoxic granule associated RNA binding protein TIA1 (386 aa).

Met-1 carries the post-translational modification N-acetylmethionine. RRM domains are found at residues 7-83, 106-184, and 214-286; these read KTLY…WATT, FHVF…WATR, and CTVY…WGKE. Residues 354-386 are disordered; sequence MGPNYGVQPPQGQNGSMLPNQPSGYRVAGYETQ. Residues 363–376 show a composition bias toward polar residues; the sequence is PQGQNGSMLPNQPS.

As to quaternary structure, homooligomer; homooligomerization is induced by Zn(2+). Interacts with FASTK; the interactions leads to its phosphorylation. Interacts (via RRM1 and the C-terminal glutamine-rich (Q) sequence) with SNRPC/U1-C (via N-terminus); thereby facilitating spliceosomal U1 snRNP recruitment to 5' splice sites. In terms of processing, phosphorylated by FASTK; phosphorylation occurs after FAS ligation in FAS-mediated apoptosis and before DNA fragmentation. As to expression, expressed in heart, small intestine, kidney, liver, lung, skeletal muscle, testes, pancreas, and ovary (at protein level).

Its subcellular location is the nucleus. The protein localises to the cytoplasm. It is found in the stress granule. RNA-binding protein involved in the regulation of alternative pre-RNA splicing and mRNA translation by binding to uridine-rich (U-rich) RNA sequences. Binds to U-rich sequences immediately downstream from a 5' splice sites in a uridine-rich small nuclear ribonucleoprotein (U snRNP)-dependent fashion, thereby modulating alternative pre-RNA splicing. Preferably binds to the U-rich IAS1 sequence in a U1 snRNP-dependent manner; this binding is optimal if a 5' splice site is adjacent to IAS1. Activates the use of heterologous 5' splice sites; the activation depends on the intron sequence downstream from the 5' splice site, with a preference for a downstream U-rich sequence. By interacting with SNRPC/U1-C, promotes recruitment and binding of spliceosomal U1 snRNP to 5' splice sites followed by U-rich sequences, thereby facilitating atypical 5' splice site recognition by U1 snRNP. Activates splicing of alternative exons with weak 5' splice sites followed by a U-rich stretch on its own pre-mRNA and on TIAR mRNA. Acts as a modulator of alternative splicing for the apoptotic FAS receptor, thereby promoting apoptosis. Binds to the 5' splice site region of FAS intron 5 to promote accumulation of transcripts that include exon 6 at the expense of transcripts in which exon 6 is skipped, thereby leading to the transcription of a membrane-bound apoptotic FAS receptor, which promotes apoptosis. Binds to a conserved AU-rich cis element in COL2A1 intron 2 and modulates alternative splicing of COL2A1 exon 2. Also binds to the equivalent AT-rich element in COL2A1 genomic DNA, and may thereby be involved in the regulation of transcription. Binds specifically to a polypyrimidine-rich controlling element (PCE) located between the weak 5' splice site and the intronic splicing silencer of CFTR mRNA to promote exon 9 inclusion, thereby antagonizing PTB1 and its role in exon skipping of CFTR exon 9. Involved in the repression of mRNA translation by binding to AU-rich elements (AREs) located in mRNA 3' untranslated regions (3' UTRs), including target ARE-bearing mRNAs encoding TNF and PTGS2. Also participates in the cellular response to environmental stress, by acting downstream of the stress-induced phosphorylation of EIF2S1/EIF2A to promote the recruitment of untranslated mRNAs to cytoplasmic stress granules (SGs), leading to stress-induced translational arrest. Formation and recruitment to SGs is regulated by Zn(2+). Possesses nucleolytic activity against cytotoxic lymphocyte target cells. Functionally, displays enhanced splicing regulatory activity compared with TIA isoform Long. The protein is Cytotoxic granule associated RNA binding protein TIA1 (TIA1) of Homo sapiens (Human).